Consider the following 205-residue polypeptide: Probable GTP-binding protein EngB (205 aa).

Positions 22-198 (HLPEYAFIGR…LSYIDEVNQD (177 aa)) constitute an EngB-type G domain. GTP contacts are provided by residues 30–37 (GRSNVGKS), 57–61 (GKTQL), 75–78 (DLPG), 142–145 (TKAD), and 177–179 (TSA). Mg(2+) contacts are provided by S37 and T59.

This sequence belongs to the TRAFAC class TrmE-Era-EngA-EngB-Septin-like GTPase superfamily. EngB GTPase family. Requires Mg(2+) as cofactor.

Its function is as follows. Necessary for normal cell division and for the maintenance of normal septation. The chain is Probable GTP-binding protein EngB from Flavobacterium psychrophilum (strain ATCC 49511 / DSM 21280 / CIP 103535 / JIP02/86).